Reading from the N-terminus, the 256-residue chain is Thiazole synthase (256 aa).

Lys-96 serves as the catalytic Schiff-base intermediate with DXP. 1-deoxy-D-xylulose 5-phosphate contacts are provided by residues Gly-157, Ala-184–Gly-185, and Asn-206–Thr-207.

It belongs to the ThiG family. Homotetramer. Forms heterodimers with either ThiH or ThiS.

Its subcellular location is the cytoplasm. It catalyses the reaction [ThiS sulfur-carrier protein]-C-terminal-Gly-aminoethanethioate + 2-iminoacetate + 1-deoxy-D-xylulose 5-phosphate = [ThiS sulfur-carrier protein]-C-terminal Gly-Gly + 2-[(2R,5Z)-2-carboxy-4-methylthiazol-5(2H)-ylidene]ethyl phosphate + 2 H2O + H(+). The protein operates within cofactor biosynthesis; thiamine diphosphate biosynthesis. Functionally, catalyzes the rearrangement of 1-deoxy-D-xylulose 5-phosphate (DXP) to produce the thiazole phosphate moiety of thiamine. Sulfur is provided by the thiocarboxylate moiety of the carrier protein ThiS. In vitro, sulfur can be provided by H(2)S. This is Thiazole synthase from Brucella anthropi (strain ATCC 49188 / DSM 6882 / CCUG 24695 / JCM 21032 / LMG 3331 / NBRC 15819 / NCTC 12168 / Alc 37) (Ochrobactrum anthropi).